Reading from the N-terminus, the 206-residue chain is Holliday junction branch migration complex subunit RuvA (206 aa).

A domain I region spans residues 1 to 63 (MIASLRGTVI…EDAMKLYGFI (63 aa)). The tract at residues 64–142 (DNESREMFSV…AFAAGVVDEG (79 aa)) is domain II. The flexible linker stretch occupies residues 143 to 153 (GEQISLPNANI). Residues 154 to 206 (ASEVVVEQVSQALVGLGFSEKQSDDAVSFVLAADPSLDTSGALRAALAKLSGK) are domain III.

This sequence belongs to the RuvA family. In terms of assembly, homotetramer. Forms an RuvA(8)-RuvB(12)-Holliday junction (HJ) complex. HJ DNA is sandwiched between 2 RuvA tetramers; dsDNA enters through RuvA and exits via RuvB. An RuvB hexamer assembles on each DNA strand where it exits the tetramer. Each RuvB hexamer is contacted by two RuvA subunits (via domain III) on 2 adjacent RuvB subunits; this complex drives branch migration. In the full resolvosome a probable DNA-RuvA(4)-RuvB(12)-RuvC(2) complex forms which resolves the HJ.

The protein resides in the cytoplasm. In terms of biological role, the RuvA-RuvB-RuvC complex processes Holliday junction (HJ) DNA during genetic recombination and DNA repair, while the RuvA-RuvB complex plays an important role in the rescue of blocked DNA replication forks via replication fork reversal (RFR). RuvA specifically binds to HJ cruciform DNA, conferring on it an open structure. The RuvB hexamer acts as an ATP-dependent pump, pulling dsDNA into and through the RuvAB complex. HJ branch migration allows RuvC to scan DNA until it finds its consensus sequence, where it cleaves and resolves the cruciform DNA. The chain is Holliday junction branch migration complex subunit RuvA from Corynebacterium glutamicum (strain ATCC 13032 / DSM 20300 / JCM 1318 / BCRC 11384 / CCUG 27702 / LMG 3730 / NBRC 12168 / NCIMB 10025 / NRRL B-2784 / 534).